The primary structure comprises 357 residues: MLHVTCQGTPSEIGYHHGSAAKGEIAKAIDFATGLIHGKTKKTQAELEQLLRELEQVMKQRWPRYYEEICGIAKGAEREVSEIVMLNTRTEFAYGLVEARDGCTTVYCKTPNGALQGQNWDFFTATKENLIQLTICQPGLPTIKMITEAGIIGKVGFNSAGVAVNYNALHLHGLRPTGLPSHLALRMALESTSPSEAYEKIVSQGGMAASAFIMVGNAHEAYGLEFSPISLCKQVADTNGRIVHTNHCLLNHGPSAQELNPLPDSWSRHGRMEHLLSGFDGTKEAFAKLWEDEDNYPLSICRAYKEGKSRGSTLFNIVFDHVGRKATVRLGRPNNPDETFVMTFSNLDTKSAIQANI.

D121 and R310 together coordinate 6-aminopenicillanate.

Belongs to the peptidase C45 family. As to quaternary structure, the active form of the enzyme results from processing of the 40-kDa monomeric precursor to a heterodimer containing subunits of 11 and 29 kDa. In terms of processing, the pre-AAT protein is synthesized as 40 kDa precursor which is then self-processed into an 11 kDa (protein A) and a 29 kDa (protein B). The B protein carries AAT activity.

The protein resides in the peroxisome matrix. The catalysed reaction is isopenicillin N + phenylacetyl-CoA + H2O = penicillin G + L-2-aminoadipate + CoA + H(+). It functions in the pathway antibiotic biosynthesis; penicillin G biosynthesis; penicillin G from L-alpha-aminoadipate and L-cysteine and L-valine: step 3/3. Its function is as follows. Nonribosomal peptide synthetase; part of the gene cluster that mediates the biosynthesis of penicillin, the world's most important antibiotic. AatA catalyzes the exchange of the alpha-aminoadipyl side chain of isopenicillin N for phenylacetic acid to yield penicillin. This step occurs in the peroxisomal matrix and the penM and paaT transporters are involved in the isopenicillin N and phenylacetic acid import into the peroxisome, respectively. The penicillin biosynthesis occurs via 3 enzymatic steps, the first corresponding to the production of the tripeptide N-[(5S)-5-amino-5-carboxypentanoyl]-L-cysteinyl-D-valine (LLD-ACV or ACV) by the NRPS acvA. The tripeptide ACV is then cyclized to isopenicillin N (IPN) by the isopenicillin N synthase ipnA that forms the beta-lactam nucleus. Finally, the alpha-aminoadipyl side chain is exchanged for phenylacetic acid by the isopenicillin N acyltransferase penDE to yield penicillin in the peroxisomal matrix. The polypeptide is Acyl-coenzyme A:6-aminopenicillanic-acid-acyltransferase 40 kDa form (Emericella nidulans (strain FGSC A4 / ATCC 38163 / CBS 112.46 / NRRL 194 / M139) (Aspergillus nidulans)).